The primary structure comprises 105 residues: Large ribosomal subunit protein uL24 (105 aa).

This sequence belongs to the universal ribosomal protein uL24 family. Part of the 50S ribosomal subunit.

Its function is as follows. One of two assembly initiator proteins, it binds directly to the 5'-end of the 23S rRNA, where it nucleates assembly of the 50S subunit. Functionally, one of the proteins that surrounds the polypeptide exit tunnel on the outside of the subunit. The sequence is that of Large ribosomal subunit protein uL24 from Clostridium novyi (strain NT).